Reading from the N-terminus, the 121-residue chain is Ribonuclease P protein component (121 aa).

It belongs to the RnpA family. Consists of a catalytic RNA component (M1 or rnpB) and a protein subunit.

It catalyses the reaction Endonucleolytic cleavage of RNA, removing 5'-extranucleotides from tRNA precursor.. Functionally, RNaseP catalyzes the removal of the 5'-leader sequence from pre-tRNA to produce the mature 5'-terminus. It can also cleave other RNA substrates such as 4.5S RNA. The protein component plays an auxiliary but essential role in vivo by binding to the 5'-leader sequence and broadening the substrate specificity of the ribozyme. The chain is Ribonuclease P protein component from Neisseria meningitidis serogroup B (strain ATCC BAA-335 / MC58).